Consider the following 127-residue polypeptide: MPKPFYVKFEVPPELADKVYQAISKVRETGGKIKKGTNETTKAVERGQAKLVVIAEDVDPPEIVAHLPLLCDEKKIPYVYVPSKQKLGQAAGIEVSAASVAVIDVGGAKDLIDEIIKSVQQIRAQSG.

The protein belongs to the eukaryotic ribosomal protein eL8 family. In terms of assembly, part of the 50S ribosomal subunit. Probably part of the RNase P complex.

The protein resides in the cytoplasm. In terms of biological role, multifunctional RNA-binding protein that recognizes the K-turn motif in ribosomal RNA, the RNA component of RNase P, box H/ACA, box C/D and box C'/D' sRNAs. The sequence is that of Large ribosomal subunit protein eL8 from Desulfurococcus amylolyticus (strain DSM 18924 / JCM 16383 / VKM B-2413 / 1221n) (Desulfurococcus kamchatkensis).